Reading from the N-terminus, the 246-residue chain is DNA repair protein RecO (246 aa).

It belongs to the RecO family.

In terms of biological role, involved in DNA repair and RecF pathway recombination. The chain is DNA repair protein RecO from Methylorubrum extorquens (strain PA1) (Methylobacterium extorquens).